The following is a 424-amino-acid chain: UPF0229 protein PC1_1960 (424 aa).

The segment at Ile-46–Glu-109 is disordered. Residues Pro-77–Arg-90 are compositionally biased toward basic and acidic residues. Over residues Gln-92–Gln-101 the composition is skewed to gly residues.

This sequence belongs to the UPF0229 family.

The chain is UPF0229 protein PC1_1960 from Pectobacterium carotovorum subsp. carotovorum (strain PC1).